The chain runs to 502 residues: ATP synthase subunit alpha (502 aa).

169 to 176 (GDRQTGKT) is an ATP binding site.

It belongs to the ATPase alpha/beta chains family. As to quaternary structure, F-type ATPases have 2 components, CF(1) - the catalytic core - and CF(0) - the membrane proton channel. CF(1) has five subunits: alpha(3), beta(3), gamma(1), delta(1), epsilon(1). CF(0) has three main subunits: a(1), b(2) and c(9-12). The alpha and beta chains form an alternating ring which encloses part of the gamma chain. CF(1) is attached to CF(0) by a central stalk formed by the gamma and epsilon chains, while a peripheral stalk is formed by the delta and b chains.

It is found in the cell membrane. The enzyme catalyses ATP + H2O + 4 H(+)(in) = ADP + phosphate + 5 H(+)(out). Functionally, produces ATP from ADP in the presence of a proton gradient across the membrane. The alpha chain is a regulatory subunit. The chain is ATP synthase subunit alpha from Streptococcus pyogenes serotype M12 (strain MGAS9429).